Consider the following 873-residue polypeptide: Bifunctional uridylyltransferase/uridylyl-removing enzyme (873 aa).

Residues 1 to 332 (MAFQSPLTFN…NGGETEPAVI (332 aa)) are uridylyltransferase. The segment at 333–692 (INEDFQRRGR…MSKKATRGGT (360 aa)) is uridylyl-removing. Positions 451-573 (VDEHSVRLLN…VRDEERLEYL (123 aa)) constitute an HD domain. ACT domains are found at residues 693-773 (EVFV…VKTR) and 800-873 (LMEL…ELAP).

The protein belongs to the GlnD family. It depends on Mg(2+) as a cofactor.

It carries out the reaction [protein-PII]-L-tyrosine + UTP = [protein-PII]-uridylyl-L-tyrosine + diphosphate. The catalysed reaction is [protein-PII]-uridylyl-L-tyrosine + H2O = [protein-PII]-L-tyrosine + UMP + H(+). Its activity is regulated as follows. Uridylyltransferase (UTase) activity is inhibited by glutamine, while glutamine activates uridylyl-removing (UR) activity. Its function is as follows. Modifies, by uridylylation and deuridylylation, the PII regulatory proteins (GlnB and homologs), in response to the nitrogen status of the cell that GlnD senses through the glutamine level. Under low glutamine levels, catalyzes the conversion of the PII proteins and UTP to PII-UMP and PPi, while under higher glutamine levels, GlnD hydrolyzes PII-UMP to PII and UMP (deuridylylation). Thus, controls uridylylation state and activity of the PII proteins, and plays an important role in the regulation of nitrogen assimilation and metabolism. The sequence is that of Bifunctional uridylyltransferase/uridylyl-removing enzyme from Vibrio vulnificus (strain CMCP6).